A 510-amino-acid chain; its full sequence is MDIRAAEISAILKDQIKNFGEEAEVSEVGQVLSVGDGIARAYGLDNVQAGEMVEFESGVRGMALNLEQDNVGIVIFGSDREIKEGQTVKRTGAIVDVPVGKGLLGRVVDALGNPIDGKGPIQSTERRRVDVKAPGIIPRKSVHEPMATGLKAIDALIPVGRGQRELIIGDRQTGKTAIALDTILNQKPGHTAGGDEKAKLYCIYVAIGQKRSTVAQFVKVLEDQGALEYSIVIAATASDAAPMQFIAPFAGCAMGEYFRDNGMHAVIVYDDLSKQAVAYRQMSLLLRRPPGREAYPGDVFYLHSRLLERAAKMGDAAGAGSLTALPVIETQANDVSAYIPTNVISITDGQIFLETDLFYQGVRPAVNVGLSVSRVGSSAQTKAMKKVAGKIKGELAQYREMAAFAQFGSDLDASTQALLNRGSRLTELLKQPQFSPLKMEEQVAVIYAGVNGYLDKLPVTKVRAFEDSLLSTLRSKHKDLLDSIAASKDLSDENAGKLKSVVESVAKSIG.

169 to 176 (GDRQTGKT) provides a ligand contact to ATP.

Belongs to the ATPase alpha/beta chains family. As to quaternary structure, F-type ATPases have 2 components, CF(1) - the catalytic core - and CF(0) - the membrane proton channel. CF(1) has five subunits: alpha(3), beta(3), gamma(1), delta(1), epsilon(1). CF(0) has three main subunits: a(1), b(2) and c(9-12). The alpha and beta chains form an alternating ring which encloses part of the gamma chain. CF(1) is attached to CF(0) by a central stalk formed by the gamma and epsilon chains, while a peripheral stalk is formed by the delta and b chains.

It is found in the cell inner membrane. The enzyme catalyses ATP + H2O + 4 H(+)(in) = ADP + phosphate + 5 H(+)(out). Its function is as follows. Produces ATP from ADP in the presence of a proton gradient across the membrane. The alpha chain is a regulatory subunit. The polypeptide is ATP synthase subunit alpha (Methylobacterium radiotolerans (strain ATCC 27329 / DSM 1819 / JCM 2831 / NBRC 15690 / NCIMB 10815 / 0-1)).